We begin with the raw amino-acid sequence, 233 residues long: Large ribosomal subunit protein uL1 (233 aa).

This sequence belongs to the universal ribosomal protein uL1 family. As to quaternary structure, part of the 50S ribosomal subunit.

Its function is as follows. Binds directly to 23S rRNA. The L1 stalk is quite mobile in the ribosome, and is involved in E site tRNA release. In terms of biological role, protein L1 is also a translational repressor protein, it controls the translation of the L11 operon by binding to its mRNA. The protein is Large ribosomal subunit protein uL1 of Thermotoga petrophila (strain ATCC BAA-488 / DSM 13995 / JCM 10881 / RKU-1).